The chain runs to 652 residues: Putative ankyrin repeat protein R734 (652 aa).

10 ANK repeats span residues 77 to 105, 106 to 136, 138 to 167, 192 to 219, 220 to 242, 243 to 274, 307 to 337, 396 to 430, 468 to 498, and 535 to 564; these read TNDIIITNTLDLNDLETFIYLLTNGANNS, EGIKLLVTWCVYYGRLDVLNYLVDNNILPTE, TLRDYLPITISENHDEVYKFIIDHEFHLGY, NDLKLSDLIFMHHLKVEILQELFSSGYE, FDNRLFEKICRTTNITLIKFFMD, IGFDPMNIVIQPNQLCIYLANILLDSGRQFTQ, INDNFINCIIRRGSLDHLKDILNRTSLNINR, SDNNIINFINHGTGTHKFEILKYLLENDCYEDPNY, PKLTPIIISNYLLSNRKISNTLLKFGTTIYS, and TNKSIMLATIISENIDLFDFLLELNRDNNL.

The protein is Putative ankyrin repeat protein R734 of Acanthamoeba polyphaga mimivirus (APMV).